Here is a 78-residue protein sequence, read N- to C-terminus: Keratin-associated protein 6-5 (78 aa).

A 25 X 2 AA repeats of G-[YCGS] region spans residues 3 to 76; it reads GYYGNYYGGR…GSGYGSGFGY (74 aa).

Belongs to the KRTAP type 6 family. In terms of assembly, interacts with hair keratins. Strong expression in narrowly defined pattern restricted to the lower and middle cortical regions of the hair shaft in both developing and cycling hair. During hair follicle regression (catagen), expression levels decrease until expression is no longer detectable in follicles at resting stage (telogen).

In the hair cortex, hair keratin intermediate filaments are embedded in an interfilamentous matrix, consisting of hair keratin-associated proteins (KRTAP), which are essential for the formation of a rigid and resistant hair shaft through their extensive disulfide bond cross-linking with abundant cysteine residues of hair keratins. The matrix proteins include the high-sulfur and high-glycine-tyrosine keratins. The protein is Keratin-associated protein 6-5 (Krtap6-5) of Mus musculus (Mouse).